The following is a 438-amino-acid chain: Protein c-ets-1-A (438 aa).

Positions 49–134 (ATFSRFTKEQ…EHLEILQKDS (86 aa)) constitute a PNT domain. The activation domain; required for transcription activation stretch occupies residues 128-240 (EILQKDSKQY…DNMCLGRISR (113 aa)). The helix HI-1 stretch occupies residues 301–309 (FKDYVRDRA). Residues 320-327 (AAALAGYT) are helix HI-2. Positions 332–412 (IQLWQFLLEL…AGKRYVYRFV (81 aa)) form a DNA-binding region, ETS. Residues 415–419 (LQSLL) are helix H4. A helix H5 region spans residues 423–429 (PEELHAM).

It belongs to the ETS family. As to quaternary structure, binds DNA as a homodimer; homodimerization is required for transcription activation.

The protein resides in the nucleus. It localises to the cytoplasm. Its activity is regulated as follows. Autoinhibited by a module composed of four alpha helices (HI-1, HI-2, H4, and H5) that flank the DNA-binding ETS domain, reducing the affinity for DNA. In terms of biological role, transcription factor. Directly controls the expression of cytokine and chemokine genes in a wide variety of different cellular contexts. The protein is Protein c-ets-1-A (ets1-a) of Xenopus laevis (African clawed frog).